The chain runs to 82 residues: Probable [Fe-S]-dependent transcriptional repressor (82 aa).

Iron-sulfur cluster contacts are provided by cysteine 56, cysteine 61, cysteine 64, and cysteine 71.

Belongs to the FeoC family.

Its function is as follows. May function as a transcriptional regulator that controls feoABC expression. This is Probable [Fe-S]-dependent transcriptional repressor from Yersinia enterocolitica serotype O:8 / biotype 1B (strain NCTC 13174 / 8081).